The primary structure comprises 519 residues: Protein nucleotidyltransferase YdiU (519 aa).

ATP contacts are provided by G100, G102, R103, K123, D135, G136, R193, and R200. D270 serves as the catalytic Proton acceptor. Mg(2+) contacts are provided by N271 and D280. Position 280 (D280) interacts with ATP.

This sequence belongs to the SELO family. Requires Mg(2+) as cofactor. Mn(2+) serves as cofactor.

It carries out the reaction L-seryl-[protein] + ATP = 3-O-(5'-adenylyl)-L-seryl-[protein] + diphosphate. The enzyme catalyses L-threonyl-[protein] + ATP = 3-O-(5'-adenylyl)-L-threonyl-[protein] + diphosphate. It catalyses the reaction L-tyrosyl-[protein] + ATP = O-(5'-adenylyl)-L-tyrosyl-[protein] + diphosphate. The catalysed reaction is L-histidyl-[protein] + UTP = N(tele)-(5'-uridylyl)-L-histidyl-[protein] + diphosphate. It carries out the reaction L-seryl-[protein] + UTP = O-(5'-uridylyl)-L-seryl-[protein] + diphosphate. The enzyme catalyses L-tyrosyl-[protein] + UTP = O-(5'-uridylyl)-L-tyrosyl-[protein] + diphosphate. Nucleotidyltransferase involved in the post-translational modification of proteins. It can catalyze the addition of adenosine monophosphate (AMP) or uridine monophosphate (UMP) to a protein, resulting in modifications known as AMPylation and UMPylation. The sequence is that of Protein nucleotidyltransferase YdiU from Xylella fastidiosa (strain Temecula1 / ATCC 700964).